We begin with the raw amino-acid sequence, 1480 residues long: Nonribosomal peptide synthetase-like enzyme fsqF (1480 aa).

Residues Ser31–Arg59 are disordered. An adenylation domain region spans residues Asp132–Tyr527. A Carrier domain is found at Ser662–Ser741. Ser700 is modified (O-(pantetheine 4'-phosphoryl)serine). The span at Ala739 to Thr754 shows a compositional bias: polar residues. The tract at residues Ala739–Arg773 is disordered. The NAD-binding domain stretch occupies residues Leu780–Gly1003. An aminotransferase domain region spans residues Asn1100–Phe1465.

It belongs to the NRP synthetase family.

Its pathway is secondary metabolite biosynthesis. Nonribosomal peptide synthetase-like enzyme; part of the gene cluster that mediates the biosynthesis of the isoquinoline alkaloids fumisoquin A, fumisoquin B and fumisoquin C; as well as small amounts of fumipyrrole as a shunt metabolite. The products of the cluster lead to a brown coloration and are important for growth and conidiation. The nonribosomal peptide synthetase-like protein fsqF, which lacks a canonical condensation domain, is required for addition of a serine-derived dehydroalanine moiety to activated tyrosine but is not essential for the subsequent steps leading to isoquinoline formation. A different enzyme, most likely the ATP-grasp enzyme fsqD, is responsible for activation of tyrosine. Three additional enzymes encoded by the fsq cluster, the N-methyltransferase fsqC, the phenol 2-monooxygenase fsqG and the FAD-dependent oxidase fsqB, catalyze the formation of the isoquinoline ring system in the fumisoquins. FsqB converts the fspF thiolation domain-bound (2S,4S,5S)-2-amino-6-(3,4-dihydroxyphenyl)-4-hydroxy-5-(methylamino)hexanoyl into isoquinoline. The cyclization most likely proceeds via a two-step mechanism, beginning with FAD-dependent oxidation of the methyl group to an iminium species followed by electrophilic attack on the deprotonated phenol. The chain is Nonribosomal peptide synthetase-like enzyme fsqF from Aspergillus fumigatus (strain ATCC MYA-4609 / CBS 101355 / FGSC A1100 / Af293) (Neosartorya fumigata).